A 571-amino-acid polypeptide reads, in one-letter code: Urease subunit alpha (571 aa).

Residues 133-571 (GGIDTHVHFI…LPLTQRYFLF (439 aa)) enclose the Urease domain. Positions 138, 140, and 221 each coordinate Ni(2+). Position 221 is an N6-carboxylysine (Lys-221). His-223 is a substrate binding site. Ni(2+) is bound by residues His-250 and His-276. The active-site Proton donor is His-324. Asp-364 serves as a coordination point for Ni(2+).

Belongs to the metallo-dependent hydrolases superfamily. Urease alpha subunit family. In terms of assembly, heterotrimer of UreA (gamma), UreB (beta) and UreC (alpha) subunits. Three heterotrimers associate to form the active enzyme. Requires Ni cation as cofactor. In terms of processing, carboxylation allows a single lysine to coordinate two nickel ions.

The protein localises to the cytoplasm. It catalyses the reaction urea + 2 H2O + H(+) = hydrogencarbonate + 2 NH4(+). Its pathway is nitrogen metabolism; urea degradation; CO(2) and NH(3) from urea (urease route): step 1/1. The protein is Urease subunit alpha of Staphylococcus aureus (strain bovine RF122 / ET3-1).